Here is a 337-residue protein sequence, read N- to C-terminus: Glyceraldehyde-3-phosphate dehydrogenase (337 aa).

NAD(+)-binding positions include 12–13, Asp-34, and Lys-79; that span reads RI. D-glyceraldehyde 3-phosphate-binding positions include 150 to 152, Thr-181, 210 to 211, and Arg-233; these read SCT and TG. The active-site Nucleophile is Cys-151. An NAD(+)-binding site is contributed by Asn-315.

The protein belongs to the glyceraldehyde-3-phosphate dehydrogenase family. Homotetramer. In terms of tissue distribution, expressed in all tissues examined.

It is found in the cytoplasm. It catalyses the reaction D-glyceraldehyde 3-phosphate + phosphate + NAD(+) = (2R)-3-phospho-glyceroyl phosphate + NADH + H(+). It functions in the pathway carbohydrate degradation; glycolysis; pyruvate from D-glyceraldehyde 3-phosphate: step 1/5. The polypeptide is Glyceraldehyde-3-phosphate dehydrogenase (gpd) (Lentinula edodes (Shiitake mushroom)).